A 264-amino-acid polypeptide reads, in one-letter code: MKQYLELMNKVLHEGAQKDDRTGTGTLSIFGHQMRFNLQEGFPLVTTKRCHLRSIIHELLWFLKGDTNVAYLHENNVTIWDEWADENGDLGPVYGKQWRSWATPDGRHIDQLETVLNQLKNDPDSRRIIVSAWNVGELDKMALAPCHAFFQFYVANGKLSCQLYQRSCDVFLGLPFNIASYALLVHMMAQQCDLEPGDFVWTGGDTHLYSNHLEQARLQLTREPRPLPKLVIKRKPESLFDYRFEDFEIEGYDPHPAIKAPVAI.

Arg21 contributes to the dUMP binding site. His51 serves as a coordination point for (6R)-5,10-methylene-5,6,7,8-tetrahydrofolate. Position 126–127 (Arg126–Arg127) interacts with dUMP. The active-site Nucleophile is Cys146. DUMP contacts are provided by residues Arg166–Asp169, Asn177, and His207–Tyr209. Position 169 (Asp169) interacts with (6R)-5,10-methylene-5,6,7,8-tetrahydrofolate. Residue Ala263 participates in (6R)-5,10-methylene-5,6,7,8-tetrahydrofolate binding.

It belongs to the thymidylate synthase family. Bacterial-type ThyA subfamily. As to quaternary structure, homodimer.

The protein resides in the cytoplasm. It carries out the reaction dUMP + (6R)-5,10-methylene-5,6,7,8-tetrahydrofolate = 7,8-dihydrofolate + dTMP. The protein operates within pyrimidine metabolism; dTTP biosynthesis. Its function is as follows. Catalyzes the reductive methylation of 2'-deoxyuridine-5'-monophosphate (dUMP) to 2'-deoxythymidine-5'-monophosphate (dTMP) while utilizing 5,10-methylenetetrahydrofolate (mTHF) as the methyl donor and reductant in the reaction, yielding dihydrofolate (DHF) as a by-product. This enzymatic reaction provides an intracellular de novo source of dTMP, an essential precursor for DNA biosynthesis. In Cronobacter sakazakii (strain ATCC BAA-894) (Enterobacter sakazakii), this protein is Thymidylate synthase.